Consider the following 103-residue polypeptide: Acylphosphatase-2 (103 aa).

N-acetylserine is present on S2. One can recognise an Acylphosphatase-like domain in the interval 13 to 103; the sequence is SVDYEVFGRV…LDFSGFSTRY (91 aa). Active-site residues include R28 and N46.

The protein belongs to the acylphosphatase family.

It catalyses the reaction an acyl phosphate + H2O = a carboxylate + phosphate + H(+). Functionally, its physiological role is not yet clear. In Gallus gallus (Chicken), this protein is Acylphosphatase-2 (ACYP2).